Consider the following 680-residue polypeptide: Pilus tip adhesin Cpa (680 aa).

The isoglutamyl cysteine thioester (Cys-Gln) cross-link spans 62 to 211; that stretch reads CFNLTKHFPS…IFQSSDKTFQ (150 aa). Residues 217–236 form a disordered region; the sequence is EYVPDTPPKPGEEPPAKTEK. The segment covering 226-236 has biased composition (basic and acidic residues); sequence PGEEPPAKTEK. Residues 243–546 constitute a cross-link (isoaspartyl lysine isopeptide (Lys-Asp)); sequence KYAEGDYSKL…ELIDVISMED (304 aa). Residues 253 to 311 enclose the CNA-B domain; sequence LEGATLKLAQIEGSGFQEKIFDSNKSGEKVELPNGTYVLSELKPPQGYGVATPITFKVA. Positions 374–526 form a cross-link, isoglutamyl cysteine thioester (Cys-Gln); the sequence is CFNADLHSPP…FFVPNSSRYQ (153 aa). The isoaspartyl lysine isopeptide (Lys-Asn) cross-link spans 562-667; sequence KTVTGTIADK…KEDETVAFEN (106 aa). The VPPTG sorting signal motif lies at 672 to 676; the sequence is VPPTG. Thr675 participates in a covalent cross-link: Threonyl lysine isopeptide (Thr-Lys) (interchain with K-? in major pilin subunit). Positions 676 to 680 are cleaved as a propeptide — removed by sortase; that stretch reads GLTTD.

As to quaternary structure, monomer. In terms of processing, proteolytically processed and assembled in pili through a transpeptidation reaction catalyzed by a sortase, which leads to a covalent link between Cpa and a major pilin subunit.

The protein resides in the fimbrium. Its function is as follows. Component of the pilus tip. Can bind covalently, via its two reactive thioester bonds, to molecular targets from host cell surface and can thus mediate adhesion of the streptococcal pili to host cells. Lysine side chains or a carbohydrate with a free amine group might be candidates for Cpa binding. In vitro, can covalently bind to spermidine, but it is unlikely that spermidine is the natural target of Cpa. The polypeptide is Pilus tip adhesin Cpa (cpa) (Streptococcus pyogenes).